A 72-amino-acid polypeptide reads, in one-letter code: UPF0154 protein BPUM_1692 (72 aa).

Residues 4–24 form a helical membrane-spanning segment; the sequence is WVVILVGVVALLAGVALGFFI.

It belongs to the UPF0154 family.

The protein localises to the cell membrane. The polypeptide is UPF0154 protein BPUM_1692 (Bacillus pumilus (strain SAFR-032)).